A 557-amino-acid polypeptide reads, in one-letter code: Venom carboxylesterase-6 (557 aa).

The N-terminal stretch at 1–21 (MYMLKLSYILLFLGFVKFSWQ) is a signal peptide. The cysteines at positions 88 and 108 are disulfide-linked. Residue N145 is glycosylated (N-linked (GlcNAc...) asparagine). S212 functions as the Acyl-ester intermediate in the catalytic mechanism. C264 and C275 form a disulfide bridge. E341 acts as the Charge relay system in catalysis. N374 carries N-linked (GlcNAc...) asparagine glycosylation. The active-site Charge relay system is H464. N-linked (GlcNAc...) asparagine glycosylation is found at N478, N528, and N542.

The protein belongs to the type-B carboxylesterase/lipase family. In terms of tissue distribution, expressed by the venom gland.

The protein localises to the secreted. It carries out the reaction a carboxylic ester + H2O = an alcohol + a carboxylate + H(+). This chain is Venom carboxylesterase-6, found in Apis mellifera (Honeybee).